We begin with the raw amino-acid sequence, 496 residues long: Ribose import ATP-binding protein RbsA (496 aa).

ABC transporter domains are found at residues 5–242 (IEMK…VGRS) and 252–496 (SQIG…TGGE). 37 to 44 (GENGAGKS) serves as a coordination point for ATP.

It belongs to the ABC transporter superfamily. Ribose importer (TC 3.A.1.2.1) family. The complex is composed of an ATP-binding protein (RbsA), two transmembrane proteins (RbsC) and a solute-binding protein (RbsB).

It is found in the cell membrane. The enzyme catalyses D-ribose(out) + ATP + H2O = D-ribose(in) + ADP + phosphate + H(+). Functionally, part of the ABC transporter complex RbsABC involved in ribose import. Responsible for energy coupling to the transport system. This Bacillus cereus (strain ATCC 14579 / DSM 31 / CCUG 7414 / JCM 2152 / NBRC 15305 / NCIMB 9373 / NCTC 2599 / NRRL B-3711) protein is Ribose import ATP-binding protein RbsA.